The following is a 261-amino-acid chain: Gap junction beta-6 protein (261 aa).

At methionine 1 to lysine 22 the chain is on the cytoplasmic side. A helical transmembrane segment spans residues valine 23–glycine 45. The Extracellular portion of the chain corresponds to aspartate 46–arginine 75. The chain crosses the membrane as a helical span at residues leucine 76–tyrosine 98. Residues arginine 99–serine 131 lie on the Cytoplasmic side of the membrane. Residues leucine 132–phenylalanine 154 form a helical membrane-spanning segment. At tyrosine 155–threonine 192 the chain is on the extracellular side. A helical transmembrane segment spans residues valine 193–leucine 215. Residues lysine 216 to serine 261 lie on the Cytoplasmic side of the membrane.

Belongs to the connexin family. Beta-type (group I) subfamily. As to quaternary structure, a connexon is composed of a hexamer of connexins. Interacts with CNST. Highly expressed in adult brain and skin. Less in uterus, lung and eye. Very low in testis and sciatic nerve. No expression before birth.

The protein localises to the cell membrane. The protein resides in the cell junction. Its subcellular location is the gap junction. In terms of biological role, one gap junction consists of a cluster of closely packed pairs of transmembrane channels, the connexons, through which materials of low MW diffuse from one cell to a neighboring cell. This Mus musculus (Mouse) protein is Gap junction beta-6 protein (Gjb6).